Consider the following 114-residue polypeptide: Large ribosomal subunit protein uL22c (114 aa).

The protein belongs to the universal ribosomal protein uL22 family. In terms of assembly, part of the 50S ribosomal subunit.

The protein localises to the plastid. It is found in the chloroplast. Its function is as follows. This protein binds specifically to 23S rRNA. The globular domain of the protein is located near the polypeptide exit tunnel on the outside of the subunit, while an extended beta-hairpin is found that lines the wall of the exit tunnel in the center of the 70S ribosome. This is Large ribosomal subunit protein uL22c (rpl22) from Gracilaria tenuistipitata var. liui (Red alga).